Consider the following 211-residue polypeptide: Uracil phosphoribosyltransferase (211 aa).

Residues R77, R102, and 129-137 (DPMLATGGS) each bind 5-phospho-alpha-D-ribose 1-diphosphate. Uracil contacts are provided by residues I192 and 197 to 199 (GDA). D198 contacts 5-phospho-alpha-D-ribose 1-diphosphate.

Belongs to the UPRTase family. Mg(2+) is required as a cofactor.

It catalyses the reaction UMP + diphosphate = 5-phospho-alpha-D-ribose 1-diphosphate + uracil. It participates in pyrimidine metabolism; UMP biosynthesis via salvage pathway; UMP from uracil: step 1/1. With respect to regulation, allosterically activated by GTP. Catalyzes the conversion of uracil and 5-phospho-alpha-D-ribose 1-diphosphate (PRPP) to UMP and diphosphate. The sequence is that of Uracil phosphoribosyltransferase from Corynebacterium diphtheriae (strain ATCC 700971 / NCTC 13129 / Biotype gravis).